A 49-amino-acid polypeptide reads, in one-letter code: Osteocalcin (49 aa).

The Gla domain maps to 1–47 (YLDHGLGAPAPYPDPLEPRREVCELNPDCDELADHIGFQEAYRRFYG). Position 9 is a hydroxyproline (proline 9). Positions 17, 21, 24, and 30 each coordinate Ca(2+). 4-carboxyglutamate occurs at positions 17, 21, and 24. Cysteine 23 and cysteine 29 are oxidised to a cystine.

This sequence belongs to the osteocalcin/matrix Gla protein family. Gamma-carboxyglutamate residues are formed by vitamin K dependent carboxylation by GGCX. These residues are essential for the binding of calcium. Decarboxylation promotes the hormone activity.

It localises to the secreted. Its function is as follows. The carboxylated form is one of the main organic components of the bone matrix, which constitutes 1-2% of the total bone protein. It acts as a negative regulator of bone formation and is required to limit bone formation without impairing bone resorption or mineralization. The carboxylated form binds strongly to apatite and calcium. In terms of biological role, the uncarboxylated form acts as a hormone secreted by osteoblasts, which regulates different cellular processes, such as energy metabolism, male fertility and brain development. Regulates of energy metabolism by acting as a hormone favoring pancreatic beta-cell proliferation, insulin secretion and sensitivity and energy expenditure. Uncarboxylated osteocalcin hormone also promotes testosterone production in the testes: acts as a ligand for G protein-coupled receptor GPRC6A at the surface of Leydig cells, initiating a signaling response that promotes the expression of enzymes required for testosterone synthesis in a CREB-dependent manner. Also acts as a regulator of brain development: osteocalcin hormone crosses the blood-brain barrier and acts as a ligand for GPR158 on neurons, initiating a signaling response that prevents neuronal apoptosis in the hippocampus, favors the synthesis of all monoamine neurotransmitters and inhibits that of gamma-aminobutyric acid (GABA). Osteocalcin also crosses the placenta during pregnancy and maternal osteocalcin is required for fetal brain development. The protein is Osteocalcin (BGLAP) of Sus scrofa (Pig).